Reading from the N-terminus, the 231-residue chain is Ureidoacrylate amidohydrolase RutB (231 aa).

D25 (proton acceptor) is an active-site residue. Residue K134 is part of the active site. C167 (nucleophile) is an active-site residue.

This sequence belongs to the isochorismatase family. RutB subfamily.

It catalyses the reaction (Z)-3-ureidoacrylate + H2O + H(+) = (Z)-3-aminoacrylate + NH4(+) + CO2. The enzyme catalyses (Z)-3-ureidoacrylate + H2O = (Z)-3-aminoacrylate + carbamate + H(+). It carries out the reaction (Z)-2-methylureidoacrylate + H2O + H(+) = (Z)-2-methylaminoacrylate + NH4(+) + CO2. Hydrolyzes ureidoacrylate to form aminoacrylate and carbamate. The carbamate hydrolyzes spontaneously, thereby releasing one of the nitrogen atoms of the pyrimidine ring as ammonia and one of its carbon atoms as CO2. This Escherichia coli O9:H4 (strain HS) protein is Ureidoacrylate amidohydrolase RutB.